Consider the following 504-residue polypeptide: ATP synthase subunit alpha, chloroplastic (504 aa).

170–177 lines the ATP pocket; sequence GDRQTGKT.

It belongs to the ATPase alpha/beta chains family. As to quaternary structure, F-type ATPases have 2 components, CF(1) - the catalytic core - and CF(0) - the membrane proton channel. CF(1) has five subunits: alpha(3), beta(3), gamma(1), delta(1), epsilon(1). CF(0) has four main subunits: a, b, b' and c.

The protein resides in the plastid. The protein localises to the chloroplast thylakoid membrane. The enzyme catalyses ATP + H2O + 4 H(+)(in) = ADP + phosphate + 5 H(+)(out). In terms of biological role, produces ATP from ADP in the presence of a proton gradient across the membrane. The alpha chain is a regulatory subunit. In Pyropia yezoensis (Susabi-nori), this protein is ATP synthase subunit alpha, chloroplastic.